Here is a 295-residue protein sequence, read N- to C-terminus: Myosin light chain kinase A (295 aa).

The Protein kinase domain maps to 8 to 265; sequence YEFKEELGRG…ATNALNHPWL (258 aa). ATP-binding positions include 14 to 22 and K37; that span reads LGRGAFSIV. Residue D130 is the Proton acceptor of the active site. 2 positions are modified to phosphothreonine: T166 and T289. The interval 264 to 295 is autoinhibitory domain; the sequence is WLKSNNSNNTIDTVKMKEYIVERQKTQTKLVN.

Belongs to the protein kinase superfamily. CAMK Ser/Thr protein kinase family. CaMK subfamily. Post-translationally, autophosphorylated. Transiently phosphorylated on Thr-166 and Thr-289. This phosphorylation is gbpC-dependent.

It catalyses the reaction L-seryl-[myosin light chain] + ATP = O-phospho-L-seryl-[myosin light chain] + ADP + H(+). It carries out the reaction L-threonyl-[myosin light chain] + ATP = O-phospho-L-threonyl-[myosin light chain] + ADP + H(+). Its activity is regulated as follows. Possesses an autoinhibitory domain. Autophosphorylation appears to increase the enzymatic activity. Activation is gbdC-dependent. Does not have a calmodulin-binding domain. Phosphorylates a specific serine in the N-terminus of a myosin light chain. Phosphorylates regulatory myosin light chain (mlcR) during chemotaxis. mlcR phosphorylation increases the motility and actin-activated ATPase activity of myosin, contributing to chemotaxis. This is Myosin light chain kinase A (mlkA) from Dictyostelium discoideum (Social amoeba).